Here is a 371-residue protein sequence, read N- to C-terminus: MRVKKLSLRNFRNYKEAQFIPHPSINIITGPNAQGKTNLLEAIYYSLRGCSFRAEKDRDVTNWESNHTVINTEVNLSSRLIKLQWKIQEGSKKLSLNGVERPRSELDLFGVVLFCPEDLSLIKGSPQERRHFLDYEVGTLSPGYSQLWRQYAKILSQRNSLLKEIRDHRSKQEVLEVWDEQLYRYGAKVIYLRLQVLKKLIPIARKTHFGLTGGTEELQAKYLSSLVLEPGLSEGQIYQVFSSSSKKIRQMELKRCQTLLGPHRDDLSLAINGVEAKTFGSQGQQRTVTLSLKLSQLDLWYHEFGEYPVLLLDDVLFELDRSRQNMLIDKILNKVQTFITTSFTGGIEETIKGAGLLWQVNAGSLTQKEEF.

30–37 lines the ATP pocket; the sequence is GPNAQGKT.

The protein belongs to the RecF family.

It is found in the cytoplasm. Its function is as follows. The RecF protein is involved in DNA metabolism; it is required for DNA replication and normal SOS inducibility. RecF binds preferentially to single-stranded, linear DNA. It also seems to bind ATP. In Desulforamulus reducens (strain ATCC BAA-1160 / DSM 100696 / MI-1) (Desulfotomaculum reducens), this protein is DNA replication and repair protein RecF.